The chain runs to 389 residues: NADH-dependent butanol dehydrogenase A (389 aa).

This sequence belongs to the iron-containing alcohol dehydrogenase family. Homodimer.

Its pathway is alcohol metabolism; butanol biosynthesis. This is NADH-dependent butanol dehydrogenase A (bdhA) from Clostridium acetobutylicum (strain ATCC 824 / DSM 792 / JCM 1419 / IAM 19013 / LMG 5710 / NBRC 13948 / NRRL B-527 / VKM B-1787 / 2291 / W).